The sequence spans 397 residues: Protein RecA (397 aa).

Residues 1–23 are disordered; it reads MALETKPAKDPAAEDKHELDPKR. 83–90 is a binding site for ATP; sequence GPESSGKT.

This sequence belongs to the RecA family.

It localises to the cytoplasm. Can catalyze the hydrolysis of ATP in the presence of single-stranded DNA, the ATP-dependent uptake of single-stranded DNA by duplex DNA, and the ATP-dependent hybridization of homologous single-stranded DNAs. It interacts with LexA causing its activation and leading to its autocatalytic cleavage. The sequence is that of Protein RecA from Bifidobacterium longum (strain NCC 2705).